The following is a 3061-amino-acid chain: Genome polyprotein (3061 aa).

The Peptidase S30 domain occupies 141 to 284 (KLTEGQMNHL…QGVMDSMVQF (144 aa)). Active-site for P1 proteinase activity residues include His192, Asp201, and Ser235. Positions 334–337 (KITC) match the Involved in interaction with stylet and aphid transmission motif. Positions 592 to 594 (PTK) match the Involved in virions binding and aphid transmission motif. One can recognise a Peptidase C6 domain in the interval 618–740 (LYIARQGFCY…ESDIKHYRVG (123 aa)). Active-site for helper component proteinase activity residues include Cys626 and His699. The Helicase ATP-binding domain maps to 1229-1381 (DIAHSEHLDF…TQQPVKLIVE (153 aa)). Residue 1242-1249 (GAVGSGKS) coordinates ATP. The DECH box signature appears at 1331-1334 (DECH). Residues 1400-1559 (DVVQFGSNVL…NLPVMTGGVS (160 aa)) enclose the Helicase C-terminal domain. The short motif at 1884–1892 (RKKGKGKGT) is the Nuclear localization signal element. The residue at position 1907 (Tyr1907) is an O-(5'-phospho-RNA)-tyrosine. One can recognise a Peptidase C4 domain in the interval 2032 to 2250 (AKSLMRGLRD…VLWGPLKLKE (219 aa)). Residues His2077, Asp2112, and Cys2182 each act as for nuclear inclusion protein A activity in the active site. The RdRp catalytic domain maps to 2517–2641 (WVYCDADGSQ…AVNPEKESIL (125 aa)). Residues 2795 to 2835 (GNDTIDAGGSTKKDAKQEQGSIQPNLNKEKEKDVNVGTSGT) are disordered. Thr3044 is subject to Phosphothreonine.

It belongs to the potyviridae genome polyprotein family. As to quaternary structure, interacts with host eIF4E protein (via cap-binding region); this interaction mediates the translation of the VPg-viral RNA conjugates. Part of a complex that comprises VPg, RNA, host EIF4E and EIF4G; this interaction mediates the translation of the VPg-viral RNA conjugates. In terms of processing, VPg is uridylylated by the polymerase and is covalently attached to the 5'-end of the genomic RNA. This uridylylated form acts as a nucleotide-peptide primer for the polymerase. Potyviral RNA is expressed as two polyproteins which undergo post-translational proteolytic processing. Genome polyprotein is processed by NIa-pro, P1 and HC-pro proteinases resulting in the production of at least ten individual proteins. P3N-PIPO polyprotein is cleaved by P1 and HC-pro proteinases resulting in the production of three individual proteins. The P1 proteinase and the HC-pro cleave only their respective C-termini autocatalytically. 6K1 is essential for proper proteolytic separation of P3 from CI.

The protein resides in the host cytoplasmic vesicle. Its subcellular location is the host nucleus. It localises to the virion. It carries out the reaction RNA(n) + a ribonucleoside 5'-triphosphate = RNA(n+1) + diphosphate. The catalysed reaction is Hydrolyzes glutaminyl bonds, and activity is further restricted by preferences for the amino acids in P6 - P1' that vary with the species of potyvirus, e.g. Glu-Xaa-Xaa-Tyr-Xaa-Gln-|-(Ser or Gly) for the enzyme from tobacco etch virus. The natural substrate is the viral polyprotein, but other proteins and oligopeptides containing the appropriate consensus sequence are also cleaved.. It catalyses the reaction Hydrolyzes a Gly-|-Gly bond at its own C-terminus, commonly in the sequence -Tyr-Xaa-Val-Gly-|-Gly, in the processing of the potyviral polyprotein.. Functionally, required for aphid transmission and also has proteolytic activity. Only cleaves a Gly-Gly dipeptide at its own C-terminus. Interacts with virions and aphid stylets. Acts as a suppressor of RNA-mediated gene silencing, also known as post-transcriptional gene silencing (PTGS), a mechanism of plant viral defense that limits the accumulation of viral RNAs. May have RNA-binding activity. In terms of biological role, has helicase activity. It may be involved in replication. Indispensable for virus replication. Reduces the abundance of host transcripts related to jasmonic acid biosynthesis therefore altering the host defenses. In order to increase its own stability, decreases host protein degradation pathways. Its function is as follows. Indispensable for virus replication. Functionally, mediates the cap-independent, EIF4E-dependent translation of viral genomic RNAs. Binds to the cap-binding site of host EIF4E and thus interferes with the host EIF4E-dependent mRNA export and translation. VPg-RNA directly binds EIF4E and is a template for transcription. Also forms trimeric complexes with EIF4E-EIF4G, which are templates for translation. In terms of biological role, has RNA-binding and proteolytic activities. An RNA-dependent RNA polymerase that plays an essential role in the virus replication. Its function is as follows. Involved in aphid transmission, cell-to-cell and systemis movement, encapsidation of the viral RNA and in the regulation of viral RNA amplification. The chain is Genome polyprotein from Potato virus Y (strain Hungarian) (PVY).